A 252-amino-acid chain; its full sequence is 3-deoxy-manno-octulosonate cytidylyltransferase (252 aa).

It belongs to the KdsB family.

It localises to the cytoplasm. The enzyme catalyses 3-deoxy-alpha-D-manno-oct-2-ulosonate + CTP = CMP-3-deoxy-beta-D-manno-octulosonate + diphosphate. It functions in the pathway nucleotide-sugar biosynthesis; CMP-3-deoxy-D-manno-octulosonate biosynthesis; CMP-3-deoxy-D-manno-octulosonate from 3-deoxy-D-manno-octulosonate and CTP: step 1/1. The protein operates within bacterial outer membrane biogenesis; lipopolysaccharide biosynthesis. In terms of biological role, activates KDO (a required 8-carbon sugar) for incorporation into bacterial lipopolysaccharide in Gram-negative bacteria. The chain is 3-deoxy-manno-octulosonate cytidylyltransferase from Nitratidesulfovibrio vulgaris (strain DP4) (Desulfovibrio vulgaris).